A 152-amino-acid polypeptide reads, in one-letter code: Transcriptional regulator MraZ (152 aa).

2 SpoVT-AbrB domains span residues 5 to 52 (ASAI…PIQE) and 81 to 124 (AHEC…DEAA).

This sequence belongs to the MraZ family. As to quaternary structure, forms oligomers.

It is found in the cytoplasm. Its subcellular location is the nucleoid. The protein is Transcriptional regulator MraZ of Shewanella halifaxensis (strain HAW-EB4).